The chain runs to 325 residues: Diacylglycerol acyltransferase/mycolyltransferase Ag85B (325 aa).

An N-terminal signal peptide occupies residues 1–40 (MTDVSGKIRAWGRRLLVGAAAAAALPGLVGLAGGAATAGA). Position 82 to 83 (82 to 83 (LR)) interacts with substrate. Positions 98-108 (FEWYYQSGLSV) are fibronectin-binding. A disulfide bond links cysteine 127 and cysteine 132. Substrate is bound by residues serine 166 and aspartate 194. Serine 166 acts as the Nucleophile in catalysis. The active site involves glutamate 270. Residues 272–275 (FVRS), lysine 279, and 302–304 (HSW) each bind substrate. Histidine 302 is a catalytic residue.

This sequence belongs to the mycobacterial A85 antigen family.

The protein localises to the secreted. The catalysed reaction is 2 alpha,alpha'-trehalose 6-mycolate = alpha,alpha'-trehalose 6,6'-bismycolate + alpha,alpha-trehalose. It carries out the reaction an acyl-CoA + a 1,2-diacyl-sn-glycerol = a triacyl-sn-glycerol + CoA. In terms of biological role, the antigen 85 proteins (FbpA, FbpB, FbpC) are responsible for the high affinity of mycobacteria for fibronectin, a large adhesive glycoprotein, which facilitates the attachment of M.tuberculosis to murine alveolar macrophages (AMs). They also help to maintain the integrity of the cell wall by catalyzing the transfer of mycolic acids to cell wall arabinogalactan and through the synthesis of alpha,alpha-trehalose dimycolate (TDM, cord factor). They catalyze the transfer of a mycoloyl residue from one molecule of alpha,alpha-trehalose monomycolate (TMM) to another TMM, leading to the formation of TDM. In Mycobacterium kansasii, this protein is Diacylglycerol acyltransferase/mycolyltransferase Ag85B (fbpB).